We begin with the raw amino-acid sequence, 475 residues long: tRNA-2-methylthio-N(6)-dimethylallyladenosine synthase (475 aa).

The interval 1–20 (MEQNLTTERSETSSSRAGTA) is disordered. In terms of domain architecture, MTTase N-terminal spans 25 to 145 (KKVFVKTYGC…LPSVVTRARA (121 aa)). The [4Fe-4S] cluster site is built by Cys34, Cys70, Cys108, Cys186, Cys190, and Cys193. One can recognise a Radical SAM core domain in the interval 172–404 (RSRGVTAFLT…QALLAEQQRA (233 aa)). Positions 407–469 (ESLVGTEIDL…GHSLFCEPAG (63 aa)) constitute a TRAM domain.

Belongs to the methylthiotransferase family. MiaB subfamily. As to quaternary structure, monomer. [4Fe-4S] cluster serves as cofactor.

It is found in the cytoplasm. The enzyme catalyses N(6)-dimethylallyladenosine(37) in tRNA + (sulfur carrier)-SH + AH2 + 2 S-adenosyl-L-methionine = 2-methylsulfanyl-N(6)-dimethylallyladenosine(37) in tRNA + (sulfur carrier)-H + 5'-deoxyadenosine + L-methionine + A + S-adenosyl-L-homocysteine + 2 H(+). Functionally, catalyzes the methylthiolation of N6-(dimethylallyl)adenosine (i(6)A), leading to the formation of 2-methylthio-N6-(dimethylallyl)adenosine (ms(2)i(6)A) at position 37 in tRNAs that read codons beginning with uridine. The chain is tRNA-2-methylthio-N(6)-dimethylallyladenosine synthase from Chelativorans sp. (strain BNC1).